Consider the following 437-residue polypeptide: UDP-N-acetylmuramoylalanine--D-glutamate ligase (437 aa).

112-118 (GSNGKST) provides a ligand contact to ATP.

The protein belongs to the MurCDEF family.

The protein localises to the cytoplasm. It carries out the reaction UDP-N-acetyl-alpha-D-muramoyl-L-alanine + D-glutamate + ATP = UDP-N-acetyl-alpha-D-muramoyl-L-alanyl-D-glutamate + ADP + phosphate + H(+). Its pathway is cell wall biogenesis; peptidoglycan biosynthesis. In terms of biological role, cell wall formation. Catalyzes the addition of glutamate to the nucleotide precursor UDP-N-acetylmuramoyl-L-alanine (UMA). The polypeptide is UDP-N-acetylmuramoylalanine--D-glutamate ligase (Haemophilus influenzae (strain PittGG)).